The primary structure comprises 193 residues: Peptide deformylase 2 (193 aa).

Positions 100 and 142 each coordinate Fe cation. E143 is an active-site residue. H146 provides a ligand contact to Fe cation.

This sequence belongs to the polypeptide deformylase family. Fe(2+) serves as cofactor.

The enzyme catalyses N-terminal N-formyl-L-methionyl-[peptide] + H2O = N-terminal L-methionyl-[peptide] + formate. In terms of biological role, removes the formyl group from the N-terminal Met of newly synthesized proteins. Requires at least a dipeptide for an efficient rate of reaction. N-terminal L-methionine is a prerequisite for activity but the enzyme has broad specificity at other positions. This chain is Peptide deformylase 2, found in Corynebacterium efficiens (strain DSM 44549 / YS-314 / AJ 12310 / JCM 11189 / NBRC 100395).